A 525-amino-acid polypeptide reads, in one-letter code: Sensory neuron membrane protein 1 (525 aa).

At 1 to 11 (MLLPKPLKYAA) the chain is on the cytoplasmic side. Residues 12–32 (IGGGVFVFGILIGWVIFPVIL) traverse the membrane as a helical segment. The Extracellular portion of the chain corresponds to 33–456 (KSQIKKEMAL…LKHQLFIPKR (424 aa)). Asparagine 67, asparagine 105, and asparagine 229 each carry an N-linked (GlcNAc...) asparagine glycan. 3 disulfides stabilise this stretch: cysteine 268–cysteine 333, cysteine 297–cysteine 352, and cysteine 335–cysteine 341. Residue asparagine 440 is glycosylated (N-linked (GlcNAc...) asparagine). Residues 457 to 477 (IVGVIRWWMVSFGLIAVLAGV) form a helical membrane-spanning segment. The Cytoplasmic portion of the chain corresponds to 478 to 525 (MYHFKDNIMGWAAKGESTTAKVNPEDGSNEQRGVSVIGQDREPPKVTM). Residues 496–525 (TAKVNPEDGSNEQRGVSVIGQDREPPKVTM) form a disordered region. Residues 516-525 (QDREPPKVTM) are compositionally biased toward basic and acidic residues.

This sequence belongs to the CD36 family. Principal component of the olfactory cilia membrane. Localizes to the somata, dendritic neck and cilia of the olfactory neurons (at protein level). Not detected in the axons of ORNs, the cytoplasm of auxiliary cells or non-sensory structures. Expression is universal among ORNs but differential between neuron and sensillum types.

It localises to the cell membrane. Plays an olfactory role that is not restricted to pheromone sensitivity. May be involved in the odor detection properties of the olfactory receptor neurons (ORNs) rather than their differentiation and growth. The chain is Sensory neuron membrane protein 1 from Antheraea polyphemus (Polyphemus moth).